A 507-amino-acid polypeptide reads, in one-letter code: Protein DETOXIFICATION 41 (507 aa).

The Cytoplasmic segment spans residues 1–62; it reads MSSTETYEPL…KLLWTLSGAS (62 aa). Residues 63–83 traverse the membrane as a helical segment; it reads IVVSVLNYMLSFVTVMFTGHL. At 84 to 92 the chain is on the vacuolar side; it reads GSLQLAGAS. A helical transmembrane segment spans residues 93–113; it reads IATVGIQGLAYGIMLGMASAV. The Cytoplasmic segment spans residues 114-137; that stretch reads QTVCGQAYGARQYSSMGIICQRAM. Residues 138–158 traverse the membrane as a helical segment; sequence VLHLAAAVFLTFLYWYSGPIL. Residues 159–170 are Vacuolar-facing; it reads KTMGQSVAIAHE. The chain crosses the membrane as a helical span at residues 171-191; it reads GQIFARGMIPQIYAFALACPM. Over 192–202 the chain is Cytoplasmic; it reads QRFLQAQNIVN. A helical transmembrane segment spans residues 203 to 223; the sequence is PLAYMSLGVFLLHTLLTWLVT. Position 224 (Asn224) is a topological domain, vacuolar. The helical transmembrane segment at 225–245 threads the bilayer; that stretch reads VLDFGLLGAALILSFSWWLLV. Residues 246–283 are Cytoplasmic-facing; sequence AVNGMYILMSPNCKETWTGFSTRAFRGIWPYFKLTVAS. A helical transmembrane segment spans residues 284–304; it reads AVMLCLEIWYNQGLVIISGLL. Residues 305-312 are Vacuolar-facing; sequence SNPTISLD. The chain crosses the membrane as a helical span at residues 313–333; that stretch reads AISICMYYLNWDMQFMLGLSA. The Cytoplasmic portion of the chain corresponds to 334-355; it reads AISVRVSNELGAGNPRVAMLSV. A helical transmembrane segment spans residues 356–376; sequence VVVNITTVLISSVLCVIVLVF. Topologically, residues 377–389 are vacuolar; that stretch reads RVGLSKAFTSDAE. The chain crosses the membrane as a helical span at residues 390–410; the sequence is VIAAVSDLFPLLAVSIFLNGI. Topologically, residues 411 to 425 are cytoplasmic; sequence QPILSGVAIGSGWQA. A helical transmembrane segment spans residues 426–446; sequence VVAYVNLVTYYVIGLPIGCVL. Topologically, residues 447–453 are vacuolar; it reads GFKTSLG. A helical membrane pass occupies residues 454-474; it reads VAGIWWGMIAGVILQTLTLIV. The Cytoplasmic segment spans residues 475–507; that stretch reads LTLKTNWTSEVENAAQRVKTSATENQEMANAGV.

Belongs to the multi antimicrobial extrusion (MATE) (TC 2.A.66.1) family. As to expression, expressed in reproductive tissues, from buds to siliques. Restricted to the endothelium layer of the ovule and the seed coat.

The protein resides in the vacuole membrane. Its pathway is secondary metabolite biosynthesis; flavonoid biosynthesis. In terms of biological role, acts as a flavonoid/H(+)-antiporter that control the vacuolar sequestration of flavonoids in the seed coat endothelium. Could transport the anthocyanin cyanidin-3-O-glucoside and epicatechin 3'-O-glucoside in vitro. This Arabidopsis thaliana (Mouse-ear cress) protein is Protein DETOXIFICATION 41.